Reading from the N-terminus, the 303-residue chain is Acetaldehyde dehydrogenase 2 (303 aa).

The active-site Acyl-thioester intermediate is the Cys-130. NAD(+) contacts are provided by residues 161–169 and Asn-272; that span reads SVGPGTRKN.

It belongs to the acetaldehyde dehydrogenase family.

The enzyme catalyses acetaldehyde + NAD(+) + CoA = acetyl-CoA + NADH + H(+). This Burkholderia vietnamiensis (strain G4 / LMG 22486) (Burkholderia cepacia (strain R1808)) protein is Acetaldehyde dehydrogenase 2.